Reading from the N-terminus, the 536-residue chain is Chromosomal replication initiator protein DnaA (536 aa).

The interval 1–72 (MNDFWQHCSA…DLARDFWNAP (72 aa)) is domain I, interacts with DnaA modulators. The segment at 72–199 (PIEVQFVLDP…EAADSMYERS (128 aa)) is domain II. A disordered region spans residues 97–121 (RAPLPAANPAPVTAGPAPSGAADAN). Positions 105–121 (PAPVTAGPAPSGAADAN) are enriched in low complexity. Residues 200-416 (KLNPVLTFDN…GALRKILAYS (217 aa)) form a domain III, AAA+ region region. Positions 244, 246, 247, and 248 each coordinate ATP. A domain IV, binds dsDNA region spans residues 417–536 (KFHGREITIE…LHVLEQTLKG (120 aa)).

Belongs to the DnaA family. In terms of assembly, oligomerizes as a right-handed, spiral filament on DNA at oriC.

Its subcellular location is the cytoplasm. Functionally, plays an essential role in the initiation and regulation of chromosomal replication. ATP-DnaA binds to the origin of replication (oriC) to initiate formation of the DNA replication initiation complex once per cell cycle. Binds the DnaA box (a 9 base pair repeat at the origin) and separates the double-stranded (ds)DNA. Forms a right-handed helical filament on oriC DNA; dsDNA binds to the exterior of the filament while single-stranded (ss)DNA is stabiized in the filament's interior. The ATP-DnaA-oriC complex binds and stabilizes one strand of the AT-rich DNA unwinding element (DUE), permitting loading of DNA polymerase. After initiation quickly degrades to an ADP-DnaA complex that is not apt for DNA replication. Binds acidic phospholipids. The protein is Chromosomal replication initiator protein DnaA of Burkholderia thailandensis (strain ATCC 700388 / DSM 13276 / CCUG 48851 / CIP 106301 / E264).